The sequence spans 808 residues: Transcription activator of gluconeogenesis PAAG_01030 (808 aa).

The tract at residues 1–90 (MTSSVRNGSP…SAKDPLRPRR (90 aa)) is disordered. Low complexity predominate over residues 69–83 (STSSTAASANNASAK). The segment at residues 97–125 (CFACQRAHLTCGDERPCQRCIKRGLQDTC) is a DNA-binding region (zn(2)-C6 fungal-type). Residues 158–170 (AARNKVNSNSQQR) are compositionally biased toward polar residues. 5 disordered regions span residues 158–203 (AARN…FSTP), 236–285 (SAFQ…YGST), 322–387 (GAGD…IYNQ), 442–461 (PPTNTQHQQQPQPPRISTPS), and 598–629 (TGGSSSSGVSSRGSSTYNSRNSATTTVMDNQS). The segment covering 171–188 (NGTNSNSDNNSTNTNSNN) has biased composition (low complexity). Polar residues-rich tracts occupy residues 189–203 (KPSHQDVSTNFFSTP), 248–279 (FDLSSNPQNHTLSPSIAQNSGTTPSSSASQNP), 339–359 (GRSSGTFTVQNFGEGSSNQSP), and 377–387 (GPTNPRNIYNQ). 2 stretches are compositionally biased toward low complexity: residues 442 to 451 (PPTNTQHQQQ) and 598 to 619 (TGGSSSSGVSSRGSSTYNSRNS). Residues 620 to 629 (ATTTVMDNQS) are compositionally biased toward polar residues.

The protein belongs to the ERT1/acuK family.

It is found in the nucleus. Functionally, transcription factor which regulates nonfermentable carbon utilization. Activator of gluconeogenetic genes. In Paracoccidioides lutzii (strain ATCC MYA-826 / Pb01) (Paracoccidioides brasiliensis), this protein is Transcription activator of gluconeogenesis PAAG_01030.